Reading from the N-terminus, the 433-residue chain is Pyrimidine-nucleoside phosphorylase (433 aa).

81-83 (KHS) contacts phosphate. Residues glycine 88 and threonine 90 each contribute to the K(+) site. Phosphate contacts are provided by residues threonine 92, 108 to 110 (KMS), and threonine 120. 2 residues coordinate substrate: arginine 168 and lysine 187. The K(+) site is built by leucine 243, alanine 246, and glutamate 255.

This sequence belongs to the thymidine/pyrimidine-nucleoside phosphorylase family. In terms of assembly, homodimer. K(+) serves as cofactor.

The enzyme catalyses uridine + phosphate = alpha-D-ribose 1-phosphate + uracil. It carries out the reaction thymidine + phosphate = 2-deoxy-alpha-D-ribose 1-phosphate + thymine. It catalyses the reaction 2'-deoxyuridine + phosphate = 2-deoxy-alpha-D-ribose 1-phosphate + uracil. Its function is as follows. Catalyzes phosphorolysis of the pyrimidine nucleosides uridine, thymidine and 2'-deoxyuridine with the formation of the corresponding pyrimidine base and ribose-1-phosphate. The sequence is that of Pyrimidine-nucleoside phosphorylase (pdp) from Staphylococcus aureus (strain NCTC 8325 / PS 47).